Reading from the N-terminus, the 507-residue chain is MDSERDVRAQLQRAGQDHLLRFYADLAPEARAALLAELASLEADALREHCQRAAAAGALAPGPLPDLAARLQPLPPERVGSAIRCDQETRLRWEEEGFRQISLNKVAVLLLAGGQGTRLGVTYPKGMYQVGLPSQKTLYQLQAERIRRVQQLADQRQGTHCTVPWYIMTSEFTLGPTIKFFKEHDFFHLDPTNVVLFEQRMLPAVTFEGKAILERKDKVAMAPDGNGGLYCALADHQILEDMKQRGVEFVHVYCVDNILVRLADPVFIGFCVLQGADCGAKVVEKAYPEEPVGVVCQVDGVPQVVEYSEISPEIAGQLGADGGLLYNAGNICNHFFTRGFLDVVTREFEPLLRLHVAMKKVPYVDEEGNLVKPLRPNGIKMEKFVFDVFQFAKNFVAFEVCREEEFSPLKNDDTADRDNPSTCRRALLAQHYRWALQAGARFLDVHGVQLTEQSGMLPNGDPPAICEISPLVSYSGEGLEMYLQGRQLQSPFILDEDQARLLRPQDC.

The short motif at 111–114 (LAGG) is the Substrate binding element. UTP contacts are provided by residues 111-114 (LAGG), Lys-125, Gln-199, and Gly-225. Residue Asn-226 participates in substrate binding. A UTP-binding site is contributed by Asp-256. The short motif at 306-307 (EY) is the Substrate binding element. Lys-380 is a UTP binding site. Lys-410 lines the substrate pocket.

It belongs to the UDPGP type 1 family.

The polypeptide is UDP-N-acetylhexosamine pyrophosphorylase-like protein 1 (Uap1l1) (Mus musculus (Mouse)).